The sequence spans 105 residues: uncharacterized protein (105 aa).

Belongs to the M.jannaschii MJ0023/MJ0349/MJ1072/MJ1074/MJ1107/MJECL16 family.

This is an uncharacterized protein from Methanocaldococcus jannaschii (strain ATCC 43067 / DSM 2661 / JAL-1 / JCM 10045 / NBRC 100440) (Methanococcus jannaschii).